The following is an 81-amino-acid chain: Omega-conotoxin-like 3 (81 aa).

Positions 1 to 22 are cleaved as a signal peptide; sequence MKLTCMMIVAVLFLTASIFITA. Positions 23 to 51 are excised as a propeptide; sequence DNSRNGIENLPRMRRHEMKKPKASKLNKR. Cystine bridges form between cysteine 53–cysteine 71, cysteine 60–cysteine 75, and cysteine 70–cysteine 79.

Belongs to the conotoxin O1 superfamily. In terms of tissue distribution, expressed by the venom duct.

The protein localises to the secreted. Functionally, omega-conotoxins act at presynaptic membranes, they bind and block voltage-gated calcium channels (Cav). The sequence is that of Omega-conotoxin-like 3 from Conus imperialis (Imperial cone).